Reading from the N-terminus, the 299-residue chain is Cathepsin B-like CP3 (299 aa).

Residues 1–19 (MKLFLLAAAAFSAPALTVS) form the signal peptide. 3 disulfides stabilise this stretch: cysteine 87–cysteine 114, cysteine 97–cysteine 140, and cysteine 133–cysteine 176. Cysteine 100 is a catalytic residue. Catalysis depends on residues histidine 244 and asparagine 265.

It belongs to the peptidase C1 family.

The protein resides in the vacuole. In terms of biological role, thiol protease which is required for parasite excystation and invasion of the proximal small intestine of the human host. This Giardia intestinalis (Giardia lamblia) protein is Cathepsin B-like CP3 (CP3).